The chain runs to 643 residues: Phosphomethylpyrimidine synthase (643 aa).

Substrate is bound by residues asparagine 248, methionine 277, tyrosine 306, histidine 342, serine 362 to glycine 364, aspartate 403 to arginine 406, and glutamate 442. Position 446 (histidine 446) interacts with Zn(2+). Tyrosine 469 is a substrate binding site. Residue histidine 510 participates in Zn(2+) binding. Residues cysteine 590, cysteine 593, and cysteine 598 each contribute to the [4Fe-4S] cluster site.

The protein belongs to the ThiC family. As to quaternary structure, homodimer. The cofactor is [4Fe-4S] cluster.

It catalyses the reaction 5-amino-1-(5-phospho-beta-D-ribosyl)imidazole + S-adenosyl-L-methionine = 4-amino-2-methyl-5-(phosphooxymethyl)pyrimidine + CO + 5'-deoxyadenosine + formate + L-methionine + 3 H(+). It participates in cofactor biosynthesis; thiamine diphosphate biosynthesis. Catalyzes the synthesis of the hydroxymethylpyrimidine phosphate (HMP-P) moiety of thiamine from aminoimidazole ribotide (AIR) in a radical S-adenosyl-L-methionine (SAM)-dependent reaction. This Burkholderia ambifaria (strain MC40-6) protein is Phosphomethylpyrimidine synthase.